The chain runs to 706 residues: Maternal embryonic leucine zipper kinase (706 aa).

One can recognise a Protein kinase domain in the interval 11–265 (YAVHDELGSG…VKKLLEHDWL (255 aa)). ATP-binding positions include 17–25 (LGSGGFGKV) and lysine 40. Aspartate 132 acts as the Proton acceptor in catalysis. Disordered regions lie at residues 366 to 386 (LDKS…SSSD), 433 to 493 (FTGR…SRGP), and 506 to 555 (SVYT…IGSA). Polar residues-rich tracts occupy residues 447–461 (SVRS…SAAT) and 506–515 (SVYTTPNTRP). Residues 656–705 (QETVHGWMTVELEIVRLQMFDKVGIRRKRLKGDAFMYKKVCEKILQMAKI) form the KA1 domain.

It belongs to the protein kinase superfamily. CAMK Ser/Thr protein kinase family. SNF1 subfamily. May be phosphorylated at Thr-169 by par-4 and/or autophosphorylated which likely results in its activation. Phosphorylation is not required for co-localization with the centrosome.

Its subcellular location is the cytoplasm. It is found in the cytoskeleton. It localises to the microtubule organizing center. The protein resides in the centrosome. The catalysed reaction is L-seryl-[protein] + ATP = O-phospho-L-seryl-[protein] + ADP + H(+). The enzyme catalyses L-threonyl-[protein] + ATP = O-phospho-L-threonyl-[protein] + ADP + H(+). Its function is as follows. Serine/threonine-protein kinase involved in cell autonomous neuroblast asymmetric divisions that generate one precursor cell and one apoptotic cell by controlling spindle positioning, myosin distribution and the segregation of cell fate determinants. Plays a role in neural fate specification in several dopaminergic linages, acting in concert with ham-1. Involved in phosphorylation of multiple proteins associated with key developmental processes, including the cell cycle, apoptosis, endocytosis, and asymmetric cell division. Promotes cell shedding during embryogenesis, probably through the endocytosis-mediated removal of cell adhesion molecules such as hmp-1 from the cell surface. May act downstream of par-4/strd-1/mop-25 to regulate cell shedding. In Caenorhabditis elegans, this protein is Maternal embryonic leucine zipper kinase.